The following is a 289-amino-acid chain: ATP synthase subunit a (289 aa).

The next 7 membrane-spanning stretches (helical) occupy residues 41-61 (KATA…WLGF), 101-121 (YLLV…IPAA), 129-149 (IAVP…AGIK), 166-186 (TAPL…TLIV), 189-209 (FTLA…LLVF), 222-242 (FVFG…ELVI), and 244-264 (ALQA…AMAH).

This sequence belongs to the ATPase A chain family. In terms of assembly, F-type ATPases have 2 components, CF(1) - the catalytic core - and CF(0) - the membrane proton channel. CF(1) has five subunits: alpha(3), beta(3), gamma(1), delta(1), epsilon(1). CF(0) has three main subunits: a(1), b(2) and c(9-12). The alpha and beta chains form an alternating ring which encloses part of the gamma chain. CF(1) is attached to CF(0) by a central stalk formed by the gamma and epsilon chains, while a peripheral stalk is formed by the delta and b chains.

Its subcellular location is the cell membrane. Functionally, key component of the proton channel; it plays a direct role in the translocation of protons across the membrane. The chain is ATP synthase subunit a from Frankia alni (strain DSM 45986 / CECT 9034 / ACN14a).